The chain runs to 343 residues: 5-amino-6-(D-ribitylamino)uracil--L-tyrosine 4-hydroxyphenyl transferase (343 aa).

Residues 39–268 (VTYVVNRNIN…AIARILLYPE (230 aa)) form the Radical SAM core domain. 3 residues coordinate [4Fe-4S] cluster: C53, C57, and C60.

It belongs to the radical SAM superfamily. CofH family. As to quaternary structure, consists of two subunits, CofG and CofH. It depends on [4Fe-4S] cluster as a cofactor.

It catalyses the reaction 5-amino-6-(D-ribitylamino)uracil + L-tyrosine + S-adenosyl-L-methionine = 5-amino-5-(4-hydroxybenzyl)-6-(D-ribitylimino)-5,6-dihydrouracil + 2-iminoacetate + 5'-deoxyadenosine + L-methionine + H(+). It functions in the pathway cofactor biosynthesis; coenzyme F0 biosynthesis. Its function is as follows. Catalyzes the radical-mediated synthesis of 5-amino-5-(4-hydroxybenzyl)-6-(D-ribitylimino)-5,6-dihydrouracil from 5-amino-6-(D-ribitylamino)uracil and L-tyrosine. The protein is 5-amino-6-(D-ribitylamino)uracil--L-tyrosine 4-hydroxyphenyl transferase of Archaeoglobus fulgidus (strain ATCC 49558 / DSM 4304 / JCM 9628 / NBRC 100126 / VC-16).